The primary structure comprises 541 residues: CTP synthase (541 aa).

The interval 1–265 (MTRFIFITGG…DAVVCRHFGL (265 aa)) is amidoligase domain. Ser-13 contributes to the CTP binding site. Ser-13 is a UTP binding site. 14 to 19 (SLGKGL) provides a ligand contact to ATP. Position 54 (Tyr-54) interacts with L-glutamine. An ATP-binding site is contributed by Asp-71. Residues Asp-71 and Glu-139 each coordinate Mg(2+). CTP is bound by residues 146–148 (DIE), 186–191 (KTKPTQ), and Lys-222. UTP-binding positions include 186–191 (KTKPTQ) and Lys-222. A Glutamine amidotransferase type-1 domain is found at 290–540 (TIAIVGKYIS…IAAAVRQSRL (251 aa)). Gly-352 is an L-glutamine binding site. The active-site Nucleophile; for glutamine hydrolysis is the Cys-379. Residues 380–383 (FGMQ), Glu-403, and Arg-468 contribute to the L-glutamine site. Residues His-513 and Glu-515 contribute to the active site.

The protein belongs to the CTP synthase family. Homotetramer.

The enzyme catalyses UTP + L-glutamine + ATP + H2O = CTP + L-glutamate + ADP + phosphate + 2 H(+). The catalysed reaction is L-glutamine + H2O = L-glutamate + NH4(+). It carries out the reaction UTP + NH4(+) + ATP = CTP + ADP + phosphate + 2 H(+). Its pathway is pyrimidine metabolism; CTP biosynthesis via de novo pathway; CTP from UDP: step 2/2. With respect to regulation, allosterically activated by GTP, when glutamine is the substrate; GTP has no effect on the reaction when ammonia is the substrate. The allosteric effector GTP functions by stabilizing the protein conformation that binds the tetrahedral intermediate(s) formed during glutamine hydrolysis. Inhibited by the product CTP, via allosteric rather than competitive inhibition. Catalyzes the ATP-dependent amination of UTP to CTP with either L-glutamine or ammonia as the source of nitrogen. Regulates intracellular CTP levels through interactions with the four ribonucleotide triphosphates. This Paramagnetospirillum magneticum (strain ATCC 700264 / AMB-1) (Magnetospirillum magneticum) protein is CTP synthase.